A 340-amino-acid polypeptide reads, in one-letter code: Ephrin-B3 (340 aa).

Positions 1–27 (MGAPHFGPGGVQVGALLLLGFAGLVSG) are cleaved as a signal peptide. Positions 28-167 (LSLEPVYWNS…TRGMKVLLRV (140 aa)) constitute an Ephrin RBD domain. At 28–227 (LSLEPVYWNS…GPLPPPSMPA (200 aa)) the chain is on the extracellular side. Cystine bridges form between cysteine 62–cysteine 104 and cysteine 92–cysteine 156. The interval 168–227 (GQSPRGGAVPRKPVSEMPMERDRGAAHSAEPGRDTIPGDPSSNATSRGAEGPLPPPSMPA) is disordered. A compositionally biased stretch (basic and acidic residues) spans 185 to 200 (PMERDRGAAHSAEPGR). Asparagine 210 carries an N-linked (GlcNAc...) asparagine glycan. A helical membrane pass occupies residues 228-248 (VAGAAGGMALLLLGVAGAGGA). The Cytoplasmic portion of the chain corresponds to 249 to 340 (MCWRRRRAKP…QSPPNIYYKV (92 aa)). A disordered region spans residues 254–300 (RRAKPSESRHPGPGSFGRGGSLGLGGGGGMGPREAEPGELGIALRGG). Positions 267 to 284 (GSFGRGGSLGLGGGGGMG) are enriched in gly residues. Arginine 271 is subject to Omega-N-methylarginine. Serine 274 bears the Phosphoserine mark. Residues 338-340 (YKV) carry the PDZ-binding motif.

It belongs to the ephrin family. As to quaternary structure, interacts with GRIP1 and GRIP2. As to expression, expressed on lateral floor plate cells, specifically on commissural axon segments that have passed through the floor plate. Expressed in cells of the retinal ganglion cell layer during retinal axon guidance to the optic disk. Expressed in myogenic progenitor cells.

It localises to the membrane. Cell surface transmembrane ligand for Eph receptors, a family of receptor tyrosine kinases which are crucial for migration, repulsion and adhesion during neuronal, vascular and epithelial development. Binds promiscuously Eph receptors residing on adjacent cells, leading to contact-dependent bidirectional signaling into neighboring cells. The signaling pathway downstream of the receptor is referred to as forward signaling while the signaling pathway downstream of the ephrin ligand is referred to as reverse signaling. May play a pivotal role in forebrain function. Binds to, and induce the collapse of, commissural axons/growth cones in vitro. May play a role in constraining the orientation of longitudinally projecting axons. The polypeptide is Ephrin-B3 (Efnb3) (Mus musculus (Mouse)).